Reading from the N-terminus, the 400-residue chain is WW domain-containing transcription regulator protein 1 (400 aa).

Lys46 participates in a covalent cross-link: Glycyl lysine isopeptide (Lys-Gly) (interchain with G-Cter in ubiquitin). The tract at residues 52-117 is disordered; it reads FFKEPDSGSH…QQHAHLRQQS (66 aa). A compositionally biased stretch (polar residues) spans 61-70; sequence HSRQSSTDSS. At Ser62 the chain carries Phosphoserine. Position 89 is a phosphoserine; by LATS2 (Ser89). Ser105 bears the Phosphoserine mark. In terms of domain architecture, WW spans 124–157; sequence LPLPPGWEMTFTATGQRYFLNHIEKITTWQDPRK. Positions 222–400 are required for interaction with PALS1; that stretch reads PNALTTQQQQ…NKSEPFLTWL (179 aa). Residues 225 to 259 are a coiled coil; the sequence is LTTQQQQQQKLRLQRIQMERERIRMRQEELMRQEA. A Phosphoserine modification is found at Ser295. Position 311 is a phosphoserine; by LATS2 (Ser311). The PDZ-binding signature appears at 394-400; that stretch reads EPFLTWL.

As to quaternary structure, binds to SLC9A3R2 via the PDZ motif at the plasma membrane. Binds to YWHAZ in vivo and in vitro through the phosphoserine-binding motif RSHSSP. Interacts (via coiled-coil domain) with SMAD2 (via MH1 domain), SMAD3 and SMAD4. Interacts with MED15. Interacts with PAX8 and NKX2-1. Interacts with TEAD1, TEAD2, TEAD3 and TEAD4. Interacts (via WW domain) with PALS1. Interacts with LATS1. Interacts with YAP1 (when phosphorylated at 'Ser-127'). Interacts (via WW domain) with PRRG4 (via cytoplasmic domain). Interacts (via WW domain) with AMOTL2 (via PPXY motif); the interaction promotes WWTR1/TAZ localization to the cytoplasm and tight junctions, thereby inhibiting its transcriptional coactivator properties. Interacts (via WW domain) with AMOT isoform 1; the interaction facilitates translocation of WWTR1/TAZ to the cytoplasm. Phosphorylated by LATS2 and STK3/MST2. Phosphorylation by LATS2 results in creation of 14-3-3 binding sites, retention in the cytoplasm, and functional inactivation. Phosphorylation results in the inhibition of transcriptional coactivation through YWHAZ-mediated nuclear export. Phosphorylated in the nucleus by PRP4K; phosphorylation leads to nuclear exclusion. Post-translationally, ubiquitinated at Lys-46; leading to proteasomal degradation. Deubiquitinated and stabilized by UCHL1 at Lys-46; leading to inhibition of osteoclastogenesis. In terms of tissue distribution, highly expressed in kidney, heart, placenta and lung. Expressed in the thyroid tissue.

Its subcellular location is the nucleus. The protein localises to the cytoplasm. It localises to the cell membrane. The protein resides in the cell junction. It is found in the tight junction. Functionally, transcriptional coactivator which acts as a downstream regulatory target in the Hippo signaling pathway that plays a pivotal role in organ size control and tumor suppression by restricting proliferation and promoting apoptosis. The core of this pathway is composed of a kinase cascade wherein STK3/MST2 and STK4/MST1, in complex with its regulatory protein SAV1, phosphorylates and activates LATS1/2 in complex with its regulatory protein MOB1, which in turn phosphorylates and inactivates YAP1 oncoprotein and WWTR1/TAZ. WWTR1 enhances PAX8 and NKX2-1/TTF1-dependent gene activation. In conjunction with YAP1, involved in the regulation of TGFB1-dependent SMAD2 and SMAD3 nuclear accumulation. Plays a key role in coupling SMADs to the transcriptional machinery such as the mediator complex. Regulates embryonic stem-cell self-renewal, promotes cell proliferation and epithelial-mesenchymal transition. This Homo sapiens (Human) protein is WW domain-containing transcription regulator protein 1.